Here is a 126-residue protein sequence, read N- to C-terminus: uncharacterized protein (126 aa).

Residues 13-45 (VAPKAGREEEQPPPPAGLGCGARGEPGRGPLEH) are disordered.

It is found in the cytoplasm. It localises to the cytoskeleton. The protein resides in the cilium basal body. This is an uncharacterized protein from Homo sapiens (Human).